Reading from the N-terminus, the 314-residue chain is Homoserine kinase (314 aa).

96 to 106 is a binding site for ATP; the sequence is PIGSGLGSSAC.

This sequence belongs to the GHMP kinase family. Homoserine kinase subfamily.

The protein resides in the cytoplasm. It carries out the reaction L-homoserine + ATP = O-phospho-L-homoserine + ADP + H(+). It participates in amino-acid biosynthesis; L-threonine biosynthesis; L-threonine from L-aspartate: step 4/5. Functionally, catalyzes the ATP-dependent phosphorylation of L-homoserine to L-homoserine phosphate. The polypeptide is Homoserine kinase (Histophilus somni (strain 129Pt) (Haemophilus somnus)).